Consider the following 622-residue polypeptide: Probable ATP-dependent RNA helicase DDX41 (622 aa).

Positions 1–15 are enriched in basic and acidic residues; it reads MEDSEPERKRARADE. 2 disordered regions span residues 1–39 and 51–84; these read MEDS…YVPL and LQRR…PQSN. Residue serine 4 is modified to Phosphoserine. Residue lysine 9 is modified to N6-acetyllysine. Lysine 9 is covalently cross-linked (Glycyl lysine isopeptide (Lys-Gly) (interchain with G-Cter in ubiquitin)). 2 positions are modified to phosphoserine: serine 21 and serine 23. Over residues 24–33 the composition is skewed to acidic residues; it reads EDEDEDDEDY. Tyrosine 33 carries the phosphotyrosine modification. Lysine 115 is covalently cross-linked (Glycyl lysine isopeptide (Lys-Gly) (interchain with G-Cter in ubiquitin)). The Q motif motif lies at 181–209; it reads KSFKEMKFPAAILRGLKKKGILHPTPIQI. In terms of domain architecture, Helicase ATP-binding spans 212-396; that stretch reads IPTILSGRDM…KSALVKPVTI (185 aa). ATP is bound at residue 225–232; the sequence is AFTGSGKT. The DEAD box motif lies at 344–347; that stretch reads DEAD. One can recognise a Helicase C-terminal domain in the interval 407–567; it reads DVIQEVEYVK…KVPPVLQVLH (161 aa). Tyrosine 414 carries the phosphotyrosine modification. Residues lysine 416 and lysine 442 each participate in a glycyl lysine isopeptide (Lys-Gly) (interchain with G-Cter in SUMO2) cross-link. Residues 580–597 form a CCHC-type zinc finger; the sequence is RGCAFCGGLGHRITDCPK.

This sequence belongs to the DEAD box helicase family. DDX41 subfamily. Identified in the spliceosome C complex. Interacts with ERCC6. Interacts with FAM50A. Interacts with STING1. Interacts with CGAS. Interacts with several spliceosomes components such as PRP19 or CDC5L. In terms of processing, acetylation at Lys-9 regulates the nuclear/cytoplasmic localization. Post-translationally, phosphorylated by BTK; phosphorylation induces binding to dsDNA and STING1. 'Lys-48'-linked ubiquitinated and degraded by TRIM21 leading to negative regulation of the innate immune response to intracellular dsDNA.

It is found in the nucleus. Its subcellular location is the cytoplasm. It catalyses the reaction ATP + H2O = ADP + phosphate + H(+). Functionally, multifunctional protein that participates in many aspects of cellular RNA metabolism. Plays pivotal roles in innate immune sensing and hematopoietic homeostasis. Recognizes foreign or self-nucleic acids generated during microbial infection, thereby initiating anti-pathogen responses. Mechanistically, phosphorylation by BTK allows binding to dsDNA leading to interaction with STING1. Modulates the homeostasis of dsDNA through its ATP-dependent DNA-unwinding activity and ATP-independent strand-annealing activity. In turn, induces STING1-mediated type I interferon and cytokine responses to DNA and DNA viruses. During murine leukemia virus infection, primarily senses the DNA/RNA hybrid generated at the first step of reverse transcription, while cGAS recognizes dsDNA generated at the next step and both are needed for the antiretroviral innate immune response. Selectively modulates the transcription of certain immunity-associated genes by regulating their alternative splicing. Binds to RNA (R)-loops, structures consisting of DNA/RNA hybrids and a displaced strand of DNA that occur during transcription, and prevents their accumulation, thereby maintaining genome stability. Also participates in pre-mRNA splicing, translational regulation and snoRNA processing, which is essential for ribosome biogenesis. The chain is Probable ATP-dependent RNA helicase DDX41 (Ddx41) from Mus musculus (Mouse).